Consider the following 267-residue polypeptide: Phosphate import ATP-binding protein PstB (267 aa).

Residues 21-262 (IAIRNLEFYY…PSKQQTEDYI (242 aa)) enclose the ABC transporter domain. 53-60 (GPSGCGKS) contributes to the ATP binding site.

This sequence belongs to the ABC transporter superfamily. Phosphate importer (TC 3.A.1.7) family. In terms of assembly, the complex is composed of two ATP-binding proteins (PstB), two transmembrane proteins (PstC and PstA) and a solute-binding protein (PstS).

Its subcellular location is the cell inner membrane. The enzyme catalyses phosphate(out) + ATP + H2O = ADP + 2 phosphate(in) + H(+). Its function is as follows. Part of the ABC transporter complex PstSACB involved in phosphate import. Responsible for energy coupling to the transport system. The protein is Phosphate import ATP-binding protein PstB of Xylella fastidiosa (strain 9a5c).